The chain runs to 459 residues: UDP-N-acetylmuramoylalanine--D-glutamate ligase (459 aa).

ATP is bound at residue 120-126 (GSNGKTT).

It belongs to the MurCDEF family.

The protein localises to the cytoplasm. The enzyme catalyses UDP-N-acetyl-alpha-D-muramoyl-L-alanine + D-glutamate + ATP = UDP-N-acetyl-alpha-D-muramoyl-L-alanyl-D-glutamate + ADP + phosphate + H(+). It functions in the pathway cell wall biogenesis; peptidoglycan biosynthesis. Cell wall formation. Catalyzes the addition of glutamate to the nucleotide precursor UDP-N-acetylmuramoyl-L-alanine (UMA). The polypeptide is UDP-N-acetylmuramoylalanine--D-glutamate ligase (Lactobacillus acidophilus (strain ATCC 700396 / NCK56 / N2 / NCFM)).